The chain runs to 198 residues: KinB-signaling pathway activation protein (198 aa).

6 helical membrane passes run 9 to 29, 42 to 62, 90 to 110, 117 to 137, 146 to 166, and 173 to 193; these read FFFS…FALK, AGQI…FSVI, LQLF…FLFF, LAGY…TAYI, TFVS…FPAL, and WLYL…LMLP.

Its subcellular location is the cell membrane. Involved in the activation of the KinB signaling pathway of sporulation. This chain is KinB-signaling pathway activation protein (kbaA), found in Bacillus subtilis (strain 168).